The primary structure comprises 457 residues: Antizyme inhibitor 2 (457 aa).

The interval 115-138 (QVAQIKYAAKHGVRLLSFDNEVEL) is necessary for polyamine uptake stimulation.

It belongs to the Orn/Lys/Arg decarboxylase class-II family. ODC antizyme inhibitor subfamily. As to quaternary structure, monomer. Interacts with OAZ1, OAZ2 and OAZ3; this interaction disrupts the interaction between the antizyme and ODC1. Does not form a heterodimer with ODC1. Ubiquitinated, leading to its proteasomal degradation; a process that is reduced in presence of antizymes. May also be degraded through the lysosomal degradative pathway in a proteasomal-independent manner.

It localises to the nucleus. Its subcellular location is the cytoplasm. The protein resides in the perinuclear region. The protein localises to the membrane. It is found in the cytoplasmic vesicle. It localises to the endoplasmic reticulum-Golgi intermediate compartment. Its subcellular location is the golgi apparatus. The protein resides in the cis-Golgi network. The protein localises to the trans-Golgi network. It is found in the cytoplasmic granule. It localises to the cell projection. Its subcellular location is the axon. The protein resides in the dendrite. The protein localises to the perikaryon. Antizyme inhibitor (AZI) protein that positively regulates ornithine decarboxylase (ODC) activity and polyamine uptake. AZI is an enzymatically inactive ODC homolog that counteracts the negative effect of ODC antizymes (AZs) OAZ1, OAZ2 and OAZ3 on ODC activity by competing with ODC for antizyme-binding. Inhibits antizyme-dependent ODC degradation and releases ODC monomers from their inactive complex with antizymes, leading to formation of the catalytically active ODC homodimer and restoring polyamine production. Participates in the morphological integrity of the trans-Golgi network (TGN) and functions as a regulator of intracellular secretory vesicle trafficking. The protein is Antizyme inhibitor 2 (Azin2) of Rattus norvegicus (Rat).